Here is a 228-residue protein sequence, read N- to C-terminus: FCS-Like Zinc finger 12 (228 aa).

The FLZ-type zinc finger occupies 162 to 205 (DFLTSCCLCKKKLQGKDIYMYKGDEGFCSKECRSLKIMEDSLKE).

The protein belongs to the FLZ family. In terms of assembly, interacts with KIN10 and KIN11 via its FLZ-type zinc finger domain. Interacts with KINB1 and KINB2 via its N-terminal part. Forms homodimer and heterodimer with FLZ2 and FLZ10 in vitro.

May act as an adapter to facilitate the interaction of SnRK1 complex with effector proteins, conferring tissue- and stimulus-type specific differences in the SnRK1 regulation pathway. The protein is FCS-Like Zinc finger 12 of Arabidopsis thaliana (Mouse-ear cress).